The following is a 245-amino-acid chain: Small ribosomal subunit protein uS2 (245 aa).

Belongs to the universal ribosomal protein uS2 family.

The polypeptide is Small ribosomal subunit protein uS2 (Dehalococcoides mccartyi (strain ATCC BAA-2266 / KCTC 15142 / 195) (Dehalococcoides ethenogenes (strain 195))).